The chain runs to 310 residues: Aspartate carbamoyltransferase catalytic subunit (310 aa).

Residues R55 and T56 each contribute to the carbamoyl phosphate site. An L-aspartate-binding site is contributed by K83. Positions 105, 136, and 139 each coordinate carbamoyl phosphate. Residues R169 and R223 each contribute to the L-aspartate site. 2 residues coordinate carbamoyl phosphate: G264 and P265.

This sequence belongs to the aspartate/ornithine carbamoyltransferase superfamily. ATCase family. In terms of assembly, heterododecamer (2C3:3R2) of six catalytic PyrB chains organized as two trimers (C3), and six regulatory PyrI chains organized as three dimers (R2).

It catalyses the reaction carbamoyl phosphate + L-aspartate = N-carbamoyl-L-aspartate + phosphate + H(+). It functions in the pathway pyrimidine metabolism; UMP biosynthesis via de novo pathway; (S)-dihydroorotate from bicarbonate: step 2/3. Catalyzes the condensation of carbamoyl phosphate and aspartate to form carbamoyl aspartate and inorganic phosphate, the committed step in the de novo pyrimidine nucleotide biosynthesis pathway. The polypeptide is Aspartate carbamoyltransferase catalytic subunit (Saccharopolyspora erythraea (strain ATCC 11635 / DSM 40517 / JCM 4748 / NBRC 13426 / NCIMB 8594 / NRRL 2338)).